The following is a 389-amino-acid chain: Na(+)/H(+) antiporter NhaA (389 aa).

The next 11 helical transmembrane spans lie at 17-37, 59-79, 95-115, 124-144, 154-174, 177-197, 213-233, 261-281, 287-307, 328-348, and 363-383; these read ILLL…LAGL, LLLW…GLEV, SLPT…YLLF, AGWA…MALL, VFLL…IALF, TDLS…LVAL, LVLW…GVII, FLIL…NMSL, PVPV…VMLF, IAPV…IASL, and LGTL…LSKV.

It belongs to the NhaA Na(+)/H(+) (TC 2.A.33) antiporter family.

The protein resides in the cell inner membrane. It catalyses the reaction Na(+)(in) + 2 H(+)(out) = Na(+)(out) + 2 H(+)(in). Its function is as follows. Na(+)/H(+) antiporter that extrudes sodium in exchange for external protons. This Shewanella sp. (strain MR-4) protein is Na(+)/H(+) antiporter NhaA.